The sequence spans 420 residues: Tyrosine--tRNA ligase (420 aa).

Position 38 (Y38) interacts with L-tyrosine. The short motif at 43–52 is the 'HIGH' region element; the sequence is PTGDSLHIGH. L-tyrosine is bound by residues Y169 and Q173. The short motif at 231–235 is the 'KMSKS' region element; sequence KFGKS. K234 is an ATP binding site. In terms of domain architecture, S4 RNA-binding spans 353–419; sequence KNIVEFLVET…GKRKYTLVKI (67 aa).

Belongs to the class-I aminoacyl-tRNA synthetase family. TyrS type 1 subfamily. Homodimer.

Its subcellular location is the cytoplasm. It catalyses the reaction tRNA(Tyr) + L-tyrosine + ATP = L-tyrosyl-tRNA(Tyr) + AMP + diphosphate + H(+). In terms of biological role, catalyzes the attachment of tyrosine to tRNA(Tyr) in a two-step reaction: tyrosine is first activated by ATP to form Tyr-AMP and then transferred to the acceptor end of tRNA(Tyr). The protein is Tyrosine--tRNA ligase of Lactobacillus johnsonii (strain CNCM I-12250 / La1 / NCC 533).